Here is a 93-residue protein sequence, read N- to C-terminus: UPF0358 protein BLi01701/BL02974 (93 aa).

It belongs to the UPF0358 family.

The polypeptide is UPF0358 protein BLi01701/BL02974 (Bacillus licheniformis (strain ATCC 14580 / DSM 13 / JCM 2505 / CCUG 7422 / NBRC 12200 / NCIMB 9375 / NCTC 10341 / NRRL NRS-1264 / Gibson 46)).